The following is a 118-amino-acid chain: MARIAGINIPDQKHAVIALTSIYGVGKTRSKAILAAAGIAENVKISELSEEQIDTLRDEVAKFVVEGDLRREISMSIKRLMDLGCYRGLRHRRGLPVRGQRTKTNARTRKGPRKPIKK.

Residues 94–118 (GLPVRGQRTKTNARTRKGPRKPIKK) form a disordered region.

The protein belongs to the universal ribosomal protein uS13 family. In terms of assembly, part of the 30S ribosomal subunit. Forms a loose heterodimer with protein S19. Forms two bridges to the 50S subunit in the 70S ribosome.

Located at the top of the head of the 30S subunit, it contacts several helices of the 16S rRNA. In the 70S ribosome it contacts the 23S rRNA (bridge B1a) and protein L5 of the 50S subunit (bridge B1b), connecting the 2 subunits; these bridges are implicated in subunit movement. Contacts the tRNAs in the A and P-sites. The protein is Small ribosomal subunit protein uS13 of Salmonella paratyphi A (strain ATCC 9150 / SARB42).